A 95-amino-acid polypeptide reads, in one-letter code: Aspartyl/glutamyl-tRNA(Asn/Gln) amidotransferase subunit C (95 aa).

Belongs to the GatC family. In terms of assembly, heterotrimer of A, B and C subunits.

It catalyses the reaction L-glutamyl-tRNA(Gln) + L-glutamine + ATP + H2O = L-glutaminyl-tRNA(Gln) + L-glutamate + ADP + phosphate + H(+). It carries out the reaction L-aspartyl-tRNA(Asn) + L-glutamine + ATP + H2O = L-asparaginyl-tRNA(Asn) + L-glutamate + ADP + phosphate + 2 H(+). In terms of biological role, allows the formation of correctly charged Asn-tRNA(Asn) or Gln-tRNA(Gln) through the transamidation of misacylated Asp-tRNA(Asn) or Glu-tRNA(Gln) in organisms which lack either or both of asparaginyl-tRNA or glutaminyl-tRNA synthetases. The reaction takes place in the presence of glutamine and ATP through an activated phospho-Asp-tRNA(Asn) or phospho-Glu-tRNA(Gln). In Gluconacetobacter diazotrophicus (strain ATCC 49037 / DSM 5601 / CCUG 37298 / CIP 103539 / LMG 7603 / PAl5), this protein is Aspartyl/glutamyl-tRNA(Asn/Gln) amidotransferase subunit C.